The sequence spans 275 residues: Light-independent protochlorophyllide reductase iron-sulfur ATP-binding protein (275 aa).

ATP contacts are provided by residues 12–17 (GIGKST) and lysine 41. Serine 16 is a Mg(2+) binding site. Residues cysteine 97 and cysteine 131 each coordinate [4Fe-4S] cluster. Residue 182–183 (NR) coordinates ATP.

The protein belongs to the NifH/BchL/ChlL family. As to quaternary structure, homodimer. Protochlorophyllide reductase is composed of three subunits; BchL, BchN and BchB. [4Fe-4S] cluster serves as cofactor.

It catalyses the reaction chlorophyllide a + oxidized 2[4Fe-4S]-[ferredoxin] + 2 ADP + 2 phosphate = protochlorophyllide a + reduced 2[4Fe-4S]-[ferredoxin] + 2 ATP + 2 H2O. It functions in the pathway porphyrin-containing compound metabolism; bacteriochlorophyll biosynthesis (light-independent). Its function is as follows. Component of the dark-operative protochlorophyllide reductase (DPOR) that uses Mg-ATP and reduced ferredoxin to reduce ring D of protochlorophyllide (Pchlide) to form chlorophyllide a (Chlide). This reaction is light-independent. The L component serves as a unique electron donor to the NB-component of the complex, and binds Mg-ATP. This chain is Light-independent protochlorophyllide reductase iron-sulfur ATP-binding protein, found in Chlorobium phaeovibrioides (strain DSM 265 / 1930) (Prosthecochloris vibrioformis (strain DSM 265)).